We begin with the raw amino-acid sequence, 185 residues long: Riboflavin kinase (185 aa).

Threonine 41 and asparagine 43 together coordinate Mg(2+). Glutamate 122 (nucleophile) is an active-site residue.

Belongs to the flavokinase family. The cofactor is Zn(2+). Requires Mg(2+) as cofactor.

It catalyses the reaction riboflavin + ATP = FMN + ADP + H(+). Its pathway is cofactor biosynthesis; FMN biosynthesis; FMN from riboflavin (ATP route): step 1/1. Its function is as follows. Catalyzes the phosphorylation of riboflavin (vitamin B2) to form flavin mononucleotide (FMN) coenzyme. The chain is Riboflavin kinase (FMN1) from Kluyveromyces lactis (strain ATCC 8585 / CBS 2359 / DSM 70799 / NBRC 1267 / NRRL Y-1140 / WM37) (Yeast).